We begin with the raw amino-acid sequence, 154 residues long: D-ribose pyranase 2 (154 aa).

The active-site Proton donor is His20. Residues Asp28, His98, and 121-123 (WGN) each bind substrate.

The protein belongs to the RbsD / FucU family. RbsD subfamily. As to quaternary structure, homodecamer.

The protein localises to the cytoplasm. It carries out the reaction beta-D-ribopyranose = beta-D-ribofuranose. It functions in the pathway carbohydrate metabolism; D-ribose degradation; D-ribose 5-phosphate from beta-D-ribopyranose: step 1/2. Catalyzes the interconversion of beta-pyran and beta-furan forms of D-ribose. This Rubrobacter xylanophilus (strain DSM 9941 / JCM 11954 / NBRC 16129 / PRD-1) protein is D-ribose pyranase 2.